Here is a 716-residue protein sequence, read N- to C-terminus: Calpain clp-4 (716 aa).

Residues 31-53 are disordered; it reads DDDDKQEAPVAVSKAPKGKGSNH. A Calpain catalytic domain is found at 240–536; the sequence is LFEDPEFPAT…FTQMEVCNLT (297 aa). Catalysis depends on residues Cys295, His452, and Asn476.

The protein belongs to the peptidase C2 family.

In terms of biological role, calcium-regulated non-lysosomal thiol-protease which catalyzes limited proteolysis of substrates. Promotes starvation-induced muscle atrophy. The sequence is that of Calpain clp-4 from Caenorhabditis elegans.